A 269-amino-acid chain; its full sequence is 5'-nucleotidase SurE (269 aa).

A divalent metal cation is bound by residues Asp-8, Asp-9, Ser-40, and Asn-95.

It belongs to the SurE nucleotidase family. It depends on a divalent metal cation as a cofactor.

Its subcellular location is the cytoplasm. It catalyses the reaction a ribonucleoside 5'-phosphate + H2O = a ribonucleoside + phosphate. Nucleotidase that shows phosphatase activity on nucleoside 5'-monophosphates. This is 5'-nucleotidase SurE from Nitratidesulfovibrio vulgaris (strain DSM 19637 / Miyazaki F) (Desulfovibrio vulgaris).